Reading from the N-terminus, the 138-residue chain is Putative esterase HI_1161 (138 aa).

This sequence belongs to the thioesterase PaaI family.

This Haemophilus influenzae (strain ATCC 51907 / DSM 11121 / KW20 / Rd) protein is Putative esterase HI_1161.